The primary structure comprises 446 residues: 3',5'-cyclic-AMP phosphodiesterase 7B (446 aa).

The PDEase domain occupies 97 to 420; the sequence is LDEDYLGQAR…AQWKSLLSNQ (324 aa). Histidine 173 functions as the Proton donor in the catalytic mechanism. A divalent metal cation-binding residues include histidine 177, histidine 213, aspartate 214, and aspartate 323. The interval 422–446 is disordered; sequence RRRGSGQDLAGPAPETLEQTEGATP. Serine 426 carries the phosphoserine modification. Phosphothreonine is present on threonine 445.

Belongs to the cyclic nucleotide phosphodiesterase family. PDE7 subfamily. A divalent metal cation is required as a cofactor. Highly expressed in brain.

It carries out the reaction 3',5'-cyclic AMP + H2O = AMP + H(+). It participates in purine metabolism; 3',5'-cyclic AMP degradation; AMP from 3',5'-cyclic AMP: step 1/1. Inhibited by dipyridamole, IBMX and SCH 51866. Insensitive to zaprinast, rolipram, and milrinone. In terms of biological role, hydrolyzes the second messenger cAMP, which is a key regulator of many important physiological processes. May be involved in the control of cAMP-mediated neural activity and cAMP metabolism in the brain. The protein is 3',5'-cyclic-AMP phosphodiesterase 7B of Mus musculus (Mouse).